A 541-amino-acid chain; its full sequence is Peptide chain release factor 3 (541 aa).

The tr-type G domain occupies 14 to 283; sequence EARRNFAIIS…AFLDYALKPG (270 aa). GTP contacts are provided by residues 23 to 30, 91 to 95, and 145 to 148; these read SHPDAGKT, DTPGH, and NKLD.

Belongs to the TRAFAC class translation factor GTPase superfamily. Classic translation factor GTPase family. PrfC subfamily.

It is found in the cytoplasm. Its function is as follows. Increases the formation of ribosomal termination complexes and stimulates activities of RF-1 and RF-2. It binds guanine nucleotides and has strong preference for UGA stop codons. It may interact directly with the ribosome. The stimulation of RF-1 and RF-2 is significantly reduced by GTP and GDP, but not by GMP. This chain is Peptide chain release factor 3, found in Acaryochloris marina (strain MBIC 11017).